A 455-amino-acid polypeptide reads, in one-letter code: Phosphoglucosamine/phosphogalactosamine mutase (455 aa).

Ser-97 acts as the Phosphoserine intermediate in catalysis. Residues Ser-97, Asp-241, Asp-243, and Asp-245 each coordinate Mg(2+). Phosphoserine is present on Ser-97.

Belongs to the phosphohexose mutase family. The cofactor is Mg(2+). In terms of processing, activated by phosphorylation.

The enzyme catalyses alpha-D-glucosamine 1-phosphate = D-glucosamine 6-phosphate. The catalysed reaction is D-galactosamine 6-phosphate = alpha-D-galactosamine 1-phosphate. In terms of biological role, involved in the synthesis of UDP-N-acetylglucosamine (UDP-GlcNAc) and UDP-N-acetylgalactosamine (UDP-GalNAc). Catalyzes the conversion of glucosamine-6-phosphate to glucosamine-1-phosphate and of galactosamine-6-phosphate to galactosamine-1-phosphate. This chain is Phosphoglucosamine/phosphogalactosamine mutase, found in Sulfurisphaera tokodaii (strain DSM 16993 / JCM 10545 / NBRC 100140 / 7) (Sulfolobus tokodaii).